The primary structure comprises 218 residues: Pyridoxine/pyridoxamine 5'-phosphate oxidase (218 aa).

Residues 14-17 (RREY) and Lys-72 contribute to the substrate site. Residues 67–72 (RIVLLK), 82–83 (YT), Arg-88, Lys-89, and Gln-111 contribute to the FMN site. Residues Tyr-129, Arg-133, and Ser-137 each contribute to the substrate site. FMN contacts are provided by residues 146 to 147 (QS) and Trp-191. Position 197 to 199 (197 to 199 (RLH)) interacts with substrate. Arg-201 provides a ligand contact to FMN.

Belongs to the pyridoxamine 5'-phosphate oxidase family. In terms of assembly, homodimer. The cofactor is FMN.

It carries out the reaction pyridoxamine 5'-phosphate + O2 + H2O = pyridoxal 5'-phosphate + H2O2 + NH4(+). The catalysed reaction is pyridoxine 5'-phosphate + O2 = pyridoxal 5'-phosphate + H2O2. The protein operates within cofactor metabolism; pyridoxal 5'-phosphate salvage; pyridoxal 5'-phosphate from pyridoxamine 5'-phosphate: step 1/1. It participates in cofactor metabolism; pyridoxal 5'-phosphate salvage; pyridoxal 5'-phosphate from pyridoxine 5'-phosphate: step 1/1. In terms of biological role, catalyzes the oxidation of either pyridoxine 5'-phosphate (PNP) or pyridoxamine 5'-phosphate (PMP) into pyridoxal 5'-phosphate (PLP). The chain is Pyridoxine/pyridoxamine 5'-phosphate oxidase from Escherichia coli O139:H28 (strain E24377A / ETEC).